The following is a 1994-amino-acid chain: Protein-methionine sulfoxide oxidase mical3a (1994 aa).

Positions 2–498 (GDGGVNAVGE…RHLLDTGETR (497 aa)) are monooxygenase domain. Residues Cys-101, 101-129 (CGLR…SRNN), Glu-120, Arg-122, Arg-127, Asn-129, and Asp-402 each bind FAD. Residues 521-627 (IVRSSKLLNW…YLSQFYEMFK (107 aa)) form the Calponin-homology (CH) domain. Residues 666–708 (ISRKRNPKDKKEKELDGLGKRRKTSQAGQSEDEELQRANRDDR) are disordered. A compositionally biased stretch (basic and acidic residues) spans 674–684 (DKKEKELDGLG). Residues 772 to 834 (DVCFFCRKRV…KPHYCYRLSG (63 aa)) form the LIM zinc-binding domain. Disordered stretches follow at residues 843-900 (PAAA…LKGT), 917-1064 (EELE…AEAR), 1176-1263 (SQPV…ELKK), 1281-1476 (LGLT…REEV), 1493-1555 (VEDT…SPEA), and 1598-1747 (KVAW…LRLR). Composition is skewed to acidic residues over residues 917–926 (EELEEVPEET) and 951–961 (SDMEEEDEDAE). Over residues 975–987 (EAVELHAKLKGES) the composition is skewed to basic and acidic residues. 2 stretches are compositionally biased toward acidic residues: residues 1001-1037 (GEMD…DPEA) and 1046-1060 (PGTE…SDAE). Residues 1200-1215 (PTGNPLSPICTQSQPC) show a composition bias toward polar residues. Composition is skewed to basic and acidic residues over residues 1249 to 1263 (RTNE…ELKK) and 1287 to 1297 (ERSKTAVEKSI). Low complexity-rich tracts occupy residues 1299 to 1314 (KTPT…YTPE) and 1358 to 1368 (SSSSGLGLNGS). A compositionally biased stretch (polar residues) spans 1369-1389 (VTTSQTAASDSYNNSDSTMLT). The span at 1437 to 1458 (PVSPPQPKQKPVTAPVPTPRTN) shows a compositional bias: pro residues. A compositionally biased stretch (basic and acidic residues) spans 1464-1476 (RVKEPNKPRREEV). Residues 1616 to 1635 (AQKDSAVKALESKKQADTLP) are compositionally biased toward basic and acidic residues. The segment covering 1649 to 1660 (SSVTSSESSTGG) has biased composition (low complexity). Positions 1661-1679 (KSKKRSSLFSPRKNKKEKK) are enriched in basic residues. Basic and acidic residues predominate over residues 1680–1693 (AKNERLSSTEETPP). The segment covering 1718–1729 (CPSTPSSSTTGD) has biased composition (low complexity). Positions 1730-1746 (SGKKKDSPLDRSSDLRL) are enriched in basic and acidic residues. 2 coiled-coil regions span residues 1796-1855 (EEEL…KALR) and 1894-1960 (QEKN…EQRD). The bMERB domain maps to 1816–1982 (KQEELKRLHR…EKEEDKDLEA (167 aa)).

The protein belongs to the Mical family. Requires FAD as cofactor.

It localises to the cytoplasm. The protein resides in the cytoskeleton. Its subcellular location is the nucleus. The enzyme catalyses L-methionyl-[F-actin] + NADPH + O2 + H(+) = L-methionyl-(R)-S-oxide-[F-actin] + NADP(+) + H2O. In terms of biological role, monooxygenase that promotes depolymerization of F-actin by mediating oxidation of specific methionine residues on actin. Acts by modifying actin subunits through the addition of oxygen to form methionine-sulfoxide, leading to promote actin filament severing and prevent repolymerization. Involved in exocytic vesicles tethering and fusion: the monooxygenase activity is required for this process. The polypeptide is Protein-methionine sulfoxide oxidase mical3a (mical3a) (Danio rerio (Zebrafish)).